A 952-amino-acid polypeptide reads, in one-letter code: Protein translocase subunit SecA (952 aa).

ATP-binding positions include Q135, 153 to 157 (GEGKT), and D575. Over residues 916 to 930 (VSAKAATQPAAPAAK) the composition is skewed to low complexity. The disordered stretch occupies residues 916–952 (VSAKAATQPAAPAAKEVGRNDPCPCGSGKKYKKCCGK). Zn(2+) is bound by residues C938, C940, C949, and C950.

This sequence belongs to the SecA family. Monomer and homodimer. Part of the essential Sec protein translocation apparatus which comprises SecA, SecYEG and auxiliary proteins SecDF. Other proteins may also be involved. It depends on Zn(2+) as a cofactor.

The protein resides in the cell membrane. Its subcellular location is the cytoplasm. The catalysed reaction is ATP + H2O + cellular proteinSide 1 = ADP + phosphate + cellular proteinSide 2.. Its function is as follows. Part of the Sec protein translocase complex. Interacts with the SecYEG preprotein conducting channel. Has a central role in coupling the hydrolysis of ATP to the transfer of proteins into and across the cell membrane, serving as an ATP-driven molecular motor driving the stepwise translocation of polypeptide chains across the membrane. In Dehalococcoides mccartyi (strain ATCC BAA-2266 / KCTC 15142 / 195) (Dehalococcoides ethenogenes (strain 195)), this protein is Protein translocase subunit SecA.